We begin with the raw amino-acid sequence, 483 residues long: Glutamyl-tRNA(Gln) amidotransferase subunit A (483 aa).

Residues Lys-76 and Ser-151 each act as charge relay system in the active site. The active-site Acyl-ester intermediate is the Ser-175.

Belongs to the amidase family. GatA subfamily. Heterotrimer of A, B and C subunits.

It catalyses the reaction L-glutamyl-tRNA(Gln) + L-glutamine + ATP + H2O = L-glutaminyl-tRNA(Gln) + L-glutamate + ADP + phosphate + H(+). Allows the formation of correctly charged Gln-tRNA(Gln) through the transamidation of misacylated Glu-tRNA(Gln) in organisms which lack glutaminyl-tRNA synthetase. The reaction takes place in the presence of glutamine and ATP through an activated gamma-phospho-Glu-tRNA(Gln). The polypeptide is Glutamyl-tRNA(Gln) amidotransferase subunit A (Pseudomonas savastanoi pv. phaseolicola (strain 1448A / Race 6) (Pseudomonas syringae pv. phaseolicola (strain 1448A / Race 6))).